Here is a 428-residue protein sequence, read N- to C-terminus: 5'-deoxyadenosine deaminase (428 aa).

Residues His-59 and His-61 each contribute to the Zn(2+) site. Positions 88 and 180 each coordinate substrate. His-207 contributes to the Zn(2+) binding site. The substrate site is built by Glu-210 and Asp-296. Zn(2+) is bound at residue Asp-296.

It belongs to the metallo-dependent hydrolases superfamily. MTA/SAH deaminase family. In terms of assembly, homotetramer. Zn(2+) serves as cofactor.

The enzyme catalyses 5'-deoxyadenosine + H2O + H(+) = 5'-deoxyinosine + NH4(+). It catalyses the reaction S-adenosyl-L-homocysteine + H2O + H(+) = S-inosyl-L-homocysteine + NH4(+). It carries out the reaction S-methyl-5'-thioadenosine + H2O + H(+) = S-methyl-5'-thioinosine + NH4(+). The catalysed reaction is adenosine + H2O + H(+) = inosine + NH4(+). Its pathway is amino-acid biosynthesis; S-adenosyl-L-methionine biosynthesis. In terms of biological role, catalyzes the deamination of three SAM-derived enzymatic products, namely 5'-deoxyadenosine, S-adenosyl-L-homocysteine, and 5'-methylthioadenosine, to produce the inosine analogs. Can also deaminate adenosine. The preferred substrate for this enzyme is 5'-deoxyadenosine, but all these substrates are efficiently deaminated. Likely functions in a S-adenosyl-L-methionine (SAM) recycling pathway from S-adenosyl-L-homocysteine (SAH) produced from SAM-dependent methylation reactions. May also be involved in the recycling of 5'-deoxyadenosine, whereupon the 5'-deoxyribose moiety of 5'-deoxyinosine is further metabolized to deoxyhexoses used for the biosynthesis of aromatic amino acids in methanogens. This is 5'-deoxyadenosine deaminase from Methanococcus aeolicus (strain ATCC BAA-1280 / DSM 17508 / OCM 812 / Nankai-3).